The primary structure comprises 257 residues: UPF0246 protein Shewana3_3143 (257 aa).

Belongs to the UPF0246 family.

This chain is UPF0246 protein Shewana3_3143, found in Shewanella sp. (strain ANA-3).